The chain runs to 197 residues: GTP cyclohydrolase 1 (197 aa).

Zn(2+) is bound by residues cysteine 85, histidine 88, and cysteine 156.

The protein belongs to the GTP cyclohydrolase I family. In terms of assembly, toroid-shaped homodecamer, composed of two pentamers of five dimers.

It catalyses the reaction GTP + H2O = 7,8-dihydroneopterin 3'-triphosphate + formate + H(+). It participates in cofactor biosynthesis; 7,8-dihydroneopterin triphosphate biosynthesis; 7,8-dihydroneopterin triphosphate from GTP: step 1/1. The chain is GTP cyclohydrolase 1 from Mesorhizobium japonicum (strain LMG 29417 / CECT 9101 / MAFF 303099) (Mesorhizobium loti (strain MAFF 303099)).